The primary structure comprises 604 residues: Microtubule-associated protein 70-4 (604 aa).

The segment at 1–33 is disordered; that stretch reads MEERGFMSPSLAISASYREGGSKGMSRRRSMRP. Positions 49 to 351 form a coiled coil; the sequence is DPVRIELNRL…ADRAAKSEAQ (303 aa). The tract at residues 233-470 is required for targeting to microtubules; it reads IIDKMHRQKV…PLNHKSSEGT (238 aa). Disordered stretches follow at residues 367-422 and 434-495; these read LKGP…RSLT and GTSR…NDSV. Over residues 371–385 the composition is skewed to low complexity; it reads TSSSSRGTSVGRSSS. Polar residues-rich tracts occupy residues 401 to 422 and 468 to 478; these read PKIT…RSLT and EGTSRGESPSS. The stretch at 521–569 forms a coiled coil; sequence LRDKDEAIEMLAKKVETLTKAMDVEAKKMRREVAVMGKEVAAMRVVDKG.

The protein belongs to the MAP70 family.

The protein localises to the cytoplasm. It localises to the cytoskeleton. In terms of biological role, plant-specific protein that interact with microtubules. In Arabidopsis thaliana (Mouse-ear cress), this protein is Microtubule-associated protein 70-4 (MAP70.4).